The primary structure comprises 391 residues: Chaperone protein DnaJ (391 aa).

Residues 2-67 (DYYDVLGVSK…QKRESYDRYG (66 aa)) enclose the J domain. The CR-type zinc finger occupies 148–226 (GVEKELLVSG…CRGQGRVKDK (79 aa)). Cys161, Cys164, Cys178, Cys181, Cys200, Cys203, Cys214, and Cys217 together coordinate Zn(2+). 4 CXXCXGXG motif repeats span residues 161–168 (CTTCSGSG), 178–185 (CERCKGSG), 200–207 (CPECGGEG), and 214–221 (CSNCRGQG).

Belongs to the DnaJ family. In terms of assembly, homodimer. Zn(2+) serves as cofactor.

The protein localises to the cytoplasm. Participates actively in the response to hyperosmotic and heat shock by preventing the aggregation of stress-denatured proteins and by disaggregating proteins, also in an autonomous, DnaK-independent fashion. Unfolded proteins bind initially to DnaJ; upon interaction with the DnaJ-bound protein, DnaK hydrolyzes its bound ATP, resulting in the formation of a stable complex. GrpE releases ADP from DnaK; ATP binding to DnaK triggers the release of the substrate protein, thus completing the reaction cycle. Several rounds of ATP-dependent interactions between DnaJ, DnaK and GrpE are required for fully efficient folding. Also involved, together with DnaK and GrpE, in the DNA replication of plasmids through activation of initiation proteins. This is Chaperone protein DnaJ from Chlamydia felis (strain Fe/C-56) (Chlamydophila felis).